Here is a 277-residue protein sequence, read N- to C-terminus: Putative thiosulfate sulfurtransferase mpst-4 (277 aa).

Rhodanese domains are found at residues N15–S153 and S155–N243. The Cysteine persulfide intermediate role is filled by C204.

The catalysed reaction is thiosulfate + hydrogen cyanide = thiocyanate + sulfite + 2 H(+). In Caenorhabditis elegans, this protein is Putative thiosulfate sulfurtransferase mpst-4.